Reading from the N-terminus, the 176-residue chain is Nucleoside triphosphate/diphosphate phosphatase (176 aa).

Residue Arg-23 is the Proton donor of the active site. Residues Asn-87, Asp-103, Asp-105, Asp-107, Asp-120, and Glu-123 each contribute to the Mg(2+) site.

The protein belongs to the Ntdp family. It depends on Mg(2+) as a cofactor.

The enzyme catalyses a ribonucleoside 5'-triphosphate + H2O = a ribonucleoside 5'-diphosphate + phosphate + H(+). It carries out the reaction a ribonucleoside 5'-diphosphate + H2O = a ribonucleoside 5'-phosphate + phosphate + H(+). In terms of biological role, has nucleoside phosphatase activity towards nucleoside triphosphates and nucleoside diphosphates. The protein is Nucleoside triphosphate/diphosphate phosphatase of Bacillus cereus (strain AH820).